A 389-amino-acid chain; its full sequence is Choline/ethanolaminephosphotransferase 1 (389 aa).

A helical membrane pass occupies residues 40–60 (VFPLWMPPNMITLMGFMFLVT). Residue asparagine 48 participates in CDP-choline binding. Mg(2+) is bound by residues aspartate 95 and aspartate 98. Arginine 103 serves as a coordination point for CDP-choline. Aspartate 116 is a binding site for Mg(2+). Catalysis depends on histidine 117, which acts as the Proton acceptor. Aspartate 120 is a binding site for Mg(2+). 7 helical membrane passes run 141-161 (TFWF…EHYF), 176-196 (GLAL…EWWA), 221-241 (VLYM…VTNV), 252-272 (MVLA…VLIW), 280-300 (LIAT…GFLV), 322-344 (SLLY…GVPL), and 350-370 (VLLG…TSVI).

Belongs to the CDP-alcohol phosphatidyltransferase class-I family. It depends on Mg(2+) as a cofactor. Mn(2+) is required as a cofactor.

Its subcellular location is the membrane. The enzyme catalyses CDP-ethanolamine + a 1,2-diacyl-sn-glycerol = a 1,2-diacyl-sn-glycero-3-phosphoethanolamine + CMP + H(+). It carries out the reaction CDP-choline + a 1,2-diacyl-sn-glycerol = a 1,2-diacyl-sn-glycero-3-phosphocholine + CMP + H(+). The protein operates within phospholipid metabolism; phosphatidylethanolamine biosynthesis; phosphatidylethanolamine from ethanolamine: step 3/3. It participates in phospholipid metabolism; phosphatidylcholine biosynthesis; phosphatidylcholine from phosphocholine: step 2/2. Catalyzes both phosphatidylcholine and phosphatidylethanolamine biosynthesis from CDP-choline and CDP-ethanolamine, respectively. Has a higher cholinephosphotransferase activity than ethanolaminephosphotransferase activity. The chain is Choline/ethanolaminephosphotransferase 1 (AAPT1) from Arabidopsis thaliana (Mouse-ear cress).